A 164-amino-acid polypeptide reads, in one-letter code: Ecotin (164 aa).

Positions 1–20 are cleaved as a signal peptide; the sequence is MKMFVPAVVFAALASASAWA. A disulfide bridge connects residues cysteine 72 and cysteine 109.

Belongs to the protease inhibitor I11 (ecotin) family. As to quaternary structure, homodimer.

It is found in the periplasm. In terms of biological role, general inhibitor of pancreatic serine proteases: inhibits chymotrypsin, trypsin, elastases, factor X, kallikrein as well as a variety of other proteases. This chain is Ecotin, found in Salmonella enteritidis PT4 (strain P125109).